The following is a 199-amino-acid chain: Holliday junction branch migration complex subunit RuvA (199 aa).

A domain I region spans residues 1–63; sequence MIDYIKGNLV…EDSQRLFGFT (63 aa). Residues 64–142 form a domain II region; sequence TRTERLLFEK…DMAPMLEPAA (79 aa). A flexible linker region spans residues 143-153; sequence GADKQQKNPQL. A domain III region spans residues 153–199; it reads LEDALEALRALGYVEKELKKVEKQLKAETLETDEYIRRALALMLKRP.

Belongs to the RuvA family. Homotetramer. Forms an RuvA(8)-RuvB(12)-Holliday junction (HJ) complex. HJ DNA is sandwiched between 2 RuvA tetramers; dsDNA enters through RuvA and exits via RuvB. An RuvB hexamer assembles on each DNA strand where it exits the tetramer. Each RuvB hexamer is contacted by two RuvA subunits (via domain III) on 2 adjacent RuvB subunits; this complex drives branch migration. In the full resolvosome a probable DNA-RuvA(4)-RuvB(12)-RuvC(2) complex forms which resolves the HJ.

It localises to the cytoplasm. Its function is as follows. The RuvA-RuvB-RuvC complex processes Holliday junction (HJ) DNA during genetic recombination and DNA repair, while the RuvA-RuvB complex plays an important role in the rescue of blocked DNA replication forks via replication fork reversal (RFR). RuvA specifically binds to HJ cruciform DNA, conferring on it an open structure. The RuvB hexamer acts as an ATP-dependent pump, pulling dsDNA into and through the RuvAB complex. HJ branch migration allows RuvC to scan DNA until it finds its consensus sequence, where it cleaves and resolves the cruciform DNA. The chain is Holliday junction branch migration complex subunit RuvA from Shouchella clausii (strain KSM-K16) (Alkalihalobacillus clausii).